The following is a 422-amino-acid chain: Replication factor C large subunit (422 aa).

G63 to T70 contributes to the ATP binding site.

Belongs to the activator 1 small subunits family. RfcL subfamily. Heteromultimer composed of small subunits (RfcS) and large subunits (RfcL).

Functionally, part of the RFC clamp loader complex which loads the PCNA sliding clamp onto DNA. This Pyrobaculum aerophilum (strain ATCC 51768 / DSM 7523 / JCM 9630 / CIP 104966 / NBRC 100827 / IM2) protein is Replication factor C large subunit.